Reading from the N-terminus, the 504-residue chain is Maturase K (504 aa).

This sequence belongs to the intron maturase 2 family. MatK subfamily.

It localises to the plastid. The protein localises to the chloroplast. Functionally, usually encoded in the trnK tRNA gene intron. Probably assists in splicing its own and other chloroplast group II introns. This chain is Maturase K, found in Gossypium turneri (Cotton).